A 490-amino-acid chain; its full sequence is Glutamate--tRNA ligase (490 aa).

The 'HIGH' region motif lies at 10-20 (PSPTGSLHIGG). Positions 251 to 255 (KLSKR) match the 'KMSKS' region motif. Residue Lys254 coordinates ATP.

It belongs to the class-I aminoacyl-tRNA synthetase family. Glutamate--tRNA ligase type 1 subfamily. As to quaternary structure, monomer.

It localises to the cytoplasm. The enzyme catalyses tRNA(Glu) + L-glutamate + ATP = L-glutamyl-tRNA(Glu) + AMP + diphosphate. Catalyzes the attachment of glutamate to tRNA(Glu) in a two-step reaction: glutamate is first activated by ATP to form Glu-AMP and then transferred to the acceptor end of tRNA(Glu). This Moorella thermoacetica (strain ATCC 39073 / JCM 9320) protein is Glutamate--tRNA ligase.